The sequence spans 346 residues: Uroporphyrinogen decarboxylase (346 aa).

Residues 26–30 (RQAGR), D76, Y153, S208, and H323 contribute to the substrate site.

Belongs to the uroporphyrinogen decarboxylase family. As to quaternary structure, homodimer.

The protein localises to the cytoplasm. It carries out the reaction uroporphyrinogen III + 4 H(+) = coproporphyrinogen III + 4 CO2. It participates in porphyrin-containing compound metabolism; protoporphyrin-IX biosynthesis; coproporphyrinogen-III from 5-aminolevulinate: step 4/4. Functionally, catalyzes the decarboxylation of four acetate groups of uroporphyrinogen-III to yield coproporphyrinogen-III. The polypeptide is Uroporphyrinogen decarboxylase (Prochlorococcus marinus (strain MIT 9515)).